The primary structure comprises 212 residues: Probable nicotinate-nucleotide adenylyltransferase (212 aa).

The protein belongs to the NadD family.

It carries out the reaction nicotinate beta-D-ribonucleotide + ATP + H(+) = deamido-NAD(+) + diphosphate. It participates in cofactor biosynthesis; NAD(+) biosynthesis; deamido-NAD(+) from nicotinate D-ribonucleotide: step 1/1. Its function is as follows. Catalyzes the reversible adenylation of nicotinate mononucleotide (NaMN) to nicotinic acid adenine dinucleotide (NaAD). This Shewanella sp. (strain MR-7) protein is Probable nicotinate-nucleotide adenylyltransferase.